The sequence spans 144 residues: Large ribosomal subunit protein uL16 (144 aa).

The span at 1–17 (MLQPKKTKFRRQQKGRA) shows a compositional bias: basic residues. The tract at residues 1-22 (MLQPKKTKFRRQQKGRAKGNAQ) is disordered.

It belongs to the universal ribosomal protein uL16 family. In terms of assembly, part of the 50S ribosomal subunit.

In terms of biological role, binds 23S rRNA and is also seen to make contacts with the A and possibly P site tRNAs. In Bacteroides fragilis (strain ATCC 25285 / DSM 2151 / CCUG 4856 / JCM 11019 / LMG 10263 / NCTC 9343 / Onslow / VPI 2553 / EN-2), this protein is Large ribosomal subunit protein uL16.